A 60-amino-acid polypeptide reads, in one-letter code: Large ribosomal subunit protein bL32 (60 aa).

Positions 1 to 23 (MACPKKKTSNAKRDQRRAHWRKQ) are enriched in basic residues. A disordered region spans residues 1–60 (MACPKKKTSNAKRDQRRAHWRKQAAREAQKALSLGKSVLSGRSNSFVYPTKEEEEGEDEE).

This sequence belongs to the bacterial ribosomal protein bL32 family.

In Microcystis aeruginosa (strain NIES-843 / IAM M-2473), this protein is Large ribosomal subunit protein bL32.